The sequence spans 482 residues: Pup--protein ligase (482 aa).

Mg(2+) is bound at residue E16. R60 serves as a coordination point for ATP. Residue Y62 coordinates Mg(2+). The active-site Proton acceptor is the D64. E70 is a Mg(2+) binding site. ATP is bound by residues T73 and W440.

The protein belongs to the Pup ligase/Pup deamidase family. Pup-conjugating enzyme subfamily.

The enzyme catalyses ATP + [prokaryotic ubiquitin-like protein]-L-glutamate + [protein]-L-lysine = ADP + phosphate + N(6)-([prokaryotic ubiquitin-like protein]-gamma-L-glutamyl)-[protein]-L-lysine.. It functions in the pathway protein degradation; proteasomal Pup-dependent pathway. The protein operates within protein modification; protein pupylation. Its function is as follows. Catalyzes the covalent attachment of the prokaryotic ubiquitin-like protein modifier Pup to the proteasomal substrate proteins, thereby targeting them for proteasomal degradation. This tagging system is termed pupylation. The ligation reaction involves the side-chain carboxylate of the C-terminal glutamate of Pup and the side-chain amino group of a substrate lysine. The chain is Pup--protein ligase from Corynebacterium glutamicum (strain R).